An 80-amino-acid polypeptide reads, in one-letter code: Acyl carrier protein (80 aa).

A Carrier domain is found at 4-79 (EAILEKVRSI…DAVKYIEDKQ (76 aa)). At Ser-39 the chain carries O-(pantetheine 4'-phosphoryl)serine.

Belongs to the acyl carrier protein (ACP) family. In terms of processing, 4'-phosphopantetheine is transferred from CoA to a specific serine of apo-ACP by AcpS. This modification is essential for activity because fatty acids are bound in thioester linkage to the sulfhydryl of the prosthetic group.

It is found in the cytoplasm. Its pathway is lipid metabolism; fatty acid biosynthesis. Its function is as follows. Carrier of the growing fatty acid chain in fatty acid biosynthesis. The chain is Acyl carrier protein from Parasynechococcus marenigrum (strain WH8102).